The following is a 106-amino-acid chain: Thiosulfate sulfurtransferase GlpE (106 aa).

The 89-residue stretch at 17–105 (QLPSVCLADI…WRHVYPYTAT (89 aa)) folds into the Rhodanese domain. C65 serves as the catalytic Cysteine persulfide intermediate.

It belongs to the GlpE family.

Its subcellular location is the cytoplasm. The enzyme catalyses thiosulfate + hydrogen cyanide = thiocyanate + sulfite + 2 H(+). It carries out the reaction thiosulfate + [thioredoxin]-dithiol = [thioredoxin]-disulfide + hydrogen sulfide + sulfite + 2 H(+). Transferase that catalyzes the transfer of sulfur from thiosulfate to thiophilic acceptors such as cyanide or dithiols. May function in a CysM-independent thiosulfate assimilation pathway by catalyzing the conversion of thiosulfate to sulfite, which can then be used for L-cysteine biosynthesis. This Tolumonas auensis (strain DSM 9187 / NBRC 110442 / TA 4) protein is Thiosulfate sulfurtransferase GlpE.